A 285-amino-acid chain; its full sequence is tRNA-cytidine(32) 2-sulfurtransferase (285 aa).

A PP-loop motif motif is present at residues 48–53 (SGGKDS). [4Fe-4S] cluster contacts are provided by Cys-122, Cys-125, and Cys-213.

Belongs to the TtcA family. As to quaternary structure, homodimer. Mg(2+) is required as a cofactor. Requires [4Fe-4S] cluster as cofactor.

It localises to the cytoplasm. The enzyme catalyses cytidine(32) in tRNA + S-sulfanyl-L-cysteinyl-[cysteine desulfurase] + AH2 + ATP = 2-thiocytidine(32) in tRNA + L-cysteinyl-[cysteine desulfurase] + A + AMP + diphosphate + H(+). Its pathway is tRNA modification. Functionally, catalyzes the ATP-dependent 2-thiolation of cytidine in position 32 of tRNA, to form 2-thiocytidine (s(2)C32). The sulfur atoms are provided by the cysteine/cysteine desulfurase (IscS) system. The chain is tRNA-cytidine(32) 2-sulfurtransferase from Cytophaga hutchinsonii (strain ATCC 33406 / DSM 1761 / CIP 103989 / NBRC 15051 / NCIMB 9469 / D465).